Consider the following 309-residue polypeptide: MCMLLREIITHVPCVKCGFFVIFNNVKQRFKKYILIQSLLSPSYFNITDAKSFIETYSCIYKDRPMIVWIDSPYYVEHGCDMRRAKVYVTSHYVKKLLNGTIHVDGVLRPPFNQVAYDERASNVKKEYLFTVLASEPGDGTAIRKRVKYTLDILRQLNMRNSTLVISNVGDFDMRSYTLDEREKYRLLHKSYFYLSLSKNEGFGLPLMESMSVGTPAVYVNAFAFKEYAVGIPIDPYDVIIEETSYGKMDNYLIRDSDVRNALQEARECIKTSCYDELSAKALEKSKEFEMPNIEEKILSDFKSVMRHR.

This sequence belongs to the glycosyltransferase group 1 family. Glycosyltransferase 4 subfamily.

This Saccharolobus islandicus (Sulfolobus islandicus) protein is Putative glycosyltransferase 48 (SIFV0048).